The primary structure comprises 212 residues: Thymidylate kinase (212 aa).

An ATP-binding site is contributed by 10–17 (GPEGAGKT).

This sequence belongs to the thymidylate kinase family.

The enzyme catalyses dTMP + ATP = dTDP + ADP. Functionally, phosphorylation of dTMP to form dTDP in both de novo and salvage pathways of dTTP synthesis. This chain is Thymidylate kinase, found in Bacillus licheniformis (strain ATCC 14580 / DSM 13 / JCM 2505 / CCUG 7422 / NBRC 12200 / NCIMB 9375 / NCTC 10341 / NRRL NRS-1264 / Gibson 46).